The following is a 235-amino-acid chain: MOB kinase activator 2 (235 aa).

The interval 1–22 (MDWLMGKSKAKPNGKKPAAEEK) is disordered. Positions 78, 83, 157, and 162 each coordinate Zn(2+). Residues 213–235 (NSGATGDGANSGASGAQNHVKER) are disordered.

Belongs to the MOB1/phocein family. In terms of assembly, binds STK38 and STK38L. In terms of processing, phosphorylated.

The protein localises to the nucleus. It localises to the cytoplasm. Its subcellular location is the perinuclear region. Stimulates the autophosphorylation and kinase activity of STK38 and STK38L. In Mus musculus (Mouse), this protein is MOB kinase activator 2 (Mob2).